The sequence spans 726 residues: Bromodomain-containing protein 3 (726 aa).

Residues 1–35 (MSTATTVAPAGIPATPGPVNPPPPEVSNPSKPGRK) form a disordered region. S2 carries the N-acetylserine modification. A compositionally biased stretch (pro residues) spans 15–26 (TPGPVNPPPPEV). Residues 34 to 140 (RKTNQLQYMQ…KIFLQKVAQM (107 aa)) enclose the Bromo 1 domain. The segment at 78–80 (KNP) is acetylated histone H3 binding. Disordered stretches follow at residues 149–169 (PPAPKGKGRKPAAGAQSAGTQ) and 237–305 (VKKK…AGKK). A compositionally biased stretch (low complexity) spans 248-261 (TTTPTTSAITASRS). 2 positions are modified to phosphoserine: S263 and S281. In terms of domain architecture, Bromo 2 spans 306–415 (GKLSEHLRYC…DVFEMRFAKM (110 aa)). A Glycyl lysine isopeptide (Lys-Gly) (interchain with G-Cter in SUMO2) cross-link involves residue K414. 3 disordered regions span residues 421 to 462 (EAPA…RATR), 477 to 575 (LAAL…MSYD), and 637 to 726 (LQKK…SDSE). The stretch at 453 to 524 (SDSEEERATR…AEEEKKAKVA (72 aa)) forms a coiled coil. A compositionally biased stretch (basic residues) spans 487–503 (KPKKKKEKKEKEKKKKD). The span at 504-521 (KEKEKEKHKVKAEEEKKA) shows a compositional bias: basic and acidic residues. Residues 523-540 (VAPPAKQAQQKKAPAKKA) show a composition bias toward low complexity. The NET domain occupies 562–644 (DSEEEEEGLP…SCLQKKQRKP (83 aa)). S563 carries the post-translational modification Phosphoserine. A coiled-coil region spans residues 645-684 (FSASGKKQAAKSKEELAQEKKKELEKRLQDVSGQLSSSKK). Residues 655–673 (KSKEELAQEKKKELEKRLQ) show a composition bias toward basic and acidic residues. The segment covering 692-726 (GSAPSGGPSRLSSSSSSESGSSSSSGSSSDSSDSE) has biased composition (low complexity).

The protein belongs to the BET family. Interacts (via bromo domain 1) with GATA1 acetylated at 'Lys-312' and 'Lys-315'. Interacts (via bromo domain 1) with GATA2 acetylated on lysine residues. Interacts (via NET domain) with CHD4 (via KIKL motif). Interacts (via NET domain) with SMARCA4 (via KIKL motif). Interacts (via NET domain) with NSD3 (via KIKL motif). As to quaternary structure, (Microbial infection) Interacts with the Integrase protein of Moloney murine leukemia virus (MLV). In terms of tissue distribution, ubiquitous.

Its subcellular location is the nucleus. It localises to the chromosome. Its activity is regulated as follows. Inhibited by JQ1, a thieno-triazolo-1,4-diazepine derivative, which specifically inhibits members of the BET family (BRD2, BRD3 and BRD4). The first bromo domain is inhibited by GSK778 (iBET-BD1), which specifically inhibits the first bromo domain of members of the BET family (BRD2, BRD3 and BRD4). The second bromo domain is inhibited by ABBV-744, which specifically inhibits the second bromo domain of members of the BET family (BRD2, BRD3 and BRD4). The second bromo domain is inhibited by GSK046 (iBET-BD2), which specifically inhibits the second bromo domain of members of the BET family (BRD2, BRD3 and BRD4). In terms of biological role, chromatin reader that recognizes and binds acetylated histones, thereby controlling gene expression and remodeling chromatin structures. Recruits transcription factors and coactivators to target gene sites, and activates RNA polymerase II machinery for transcriptional elongation. In vitro, binds acetylated lysine residues on the N-terminus of histone H2A, H2B, H3 and H4. Involved in endoderm differentiation via its association with long non-coding RNA (lncRNA) DIGIT: BRD3 undergoes liquid-liquid phase separation upon binding to lncRNA DIGIT, promoting binding to histone H3 acetylated at 'Lys-18' (H3K18ac) to induce endoderm gene expression. Also binds non-histones acetylated proteins, such as GATA1 and GATA2: regulates transcription by promoting the binding of the transcription factor GATA1 to its targets. The protein is Bromodomain-containing protein 3 of Homo sapiens (Human).